Consider the following 278-residue polypeptide: S-formylglutathione hydrolase YeiG (278 aa).

Catalysis depends on charge relay system residues serine 145, aspartate 223, and histidine 256.

This sequence belongs to the esterase D family.

The catalysed reaction is S-formylglutathione + H2O = formate + glutathione + H(+). In terms of biological role, serine hydrolase involved in the detoxification of formaldehyde. Hydrolyzes S-formylglutathione to glutathione and formate. This is S-formylglutathione hydrolase YeiG (yeiG) from Escherichia coli O6:K15:H31 (strain 536 / UPEC).